Reading from the N-terminus, the 128-residue chain is Large ribosomal subunit protein bL12 (128 aa).

It belongs to the bacterial ribosomal protein bL12 family. In terms of assembly, homodimer. Part of the ribosomal stalk of the 50S ribosomal subunit. Forms a multimeric L10(L12)X complex, where L10 forms an elongated spine to which 2 to 4 L12 dimers bind in a sequential fashion. Binds GTP-bound translation factors.

In terms of biological role, forms part of the ribosomal stalk which helps the ribosome interact with GTP-bound translation factors. Is thus essential for accurate translation. The chain is Large ribosomal subunit protein bL12 from Methylobacillus flagellatus (strain ATCC 51484 / DSM 6875 / VKM B-1610 / KT).